A 102-amino-acid chain; its full sequence is Protein B1 (102 aa).

Residues 1 to 102 (MLNDAKQTRA…AQPQPSNNRK (102 aa)) are disordered. Composition is skewed to polar residues over residues 8–17 (TRANPGTSRP) and 51–65 (GKTNGKSDGNITAGE). The segment covering 75–88 (KGPRGGKTNTRRTP) has biased composition (basic residues).

Functionally, not known. Encoded on a subgenomic RNA (RNA3) synthesized during replication and which is co-terminal with RNA1. The sequence is that of Protein B1 (B1) from Black beetle virus (BBV).